Here is a 253-residue protein sequence, read N- to C-terminus: uncharacterized protein (253 aa).

This is an uncharacterized protein from Campylobacter jejuni subsp. jejuni serotype O:2 (strain ATCC 700819 / NCTC 11168).